Reading from the N-terminus, the 250-residue chain is Sulfate transporter CysZ (250 aa).

Transmembrane regions (helical) follow at residues 27-47 (FVVL…YYLF), 64-84 (FLSW…LATF), 150-170 (FLLL…WFLF), and 210-230 (MLVA…PVAV).

Belongs to the CysZ family.

It localises to the cell inner membrane. Its function is as follows. High affinity, high specificity proton-dependent sulfate transporter, which mediates sulfate uptake. Provides the sulfur source for the cysteine synthesis pathway. The polypeptide is Sulfate transporter CysZ (Vibrio cholerae serotype O1 (strain ATCC 39315 / El Tor Inaba N16961)).